The chain runs to 301 residues: tRNA dimethylallyltransferase (301 aa).

12 to 19 (GPTAVGKT) lines the ATP pocket. 14–19 (TAVGKT) contributes to the substrate binding site. The tract at residues 37 to 40 (DSQQ) is interaction with substrate tRNA.

Belongs to the IPP transferase family. As to quaternary structure, monomer. The cofactor is Mg(2+).

It carries out the reaction adenosine(37) in tRNA + dimethylallyl diphosphate = N(6)-dimethylallyladenosine(37) in tRNA + diphosphate. Functionally, catalyzes the transfer of a dimethylallyl group onto the adenine at position 37 in tRNAs that read codons beginning with uridine, leading to the formation of N6-(dimethylallyl)adenosine (i(6)A). In Streptococcus uberis (strain ATCC BAA-854 / 0140J), this protein is tRNA dimethylallyltransferase.